We begin with the raw amino-acid sequence, 367 residues long: Queuine tRNA-ribosyltransferase (367 aa).

Residue D92 is the Proton acceptor of the active site. Substrate is bound by residues 92-96, D146, Q188, and G215; that span reads DSGGF. The interval 246-252 is RNA binding; sequence GVGTPKD. The Nucleophile role is filled by D265. C303, C305, C308, and H334 together coordinate Zn(2+).

It belongs to the queuine tRNA-ribosyltransferase family. In terms of assembly, homodimer. Within each dimer, one monomer is responsible for RNA recognition and catalysis, while the other monomer binds to the replacement base PreQ1. Zn(2+) is required as a cofactor.

The enzyme catalyses 7-aminomethyl-7-carbaguanine + guanosine(34) in tRNA = 7-aminomethyl-7-carbaguanosine(34) in tRNA + guanine. It functions in the pathway tRNA modification; tRNA-queuosine biosynthesis. Its function is as follows. Catalyzes the base-exchange of a guanine (G) residue with the queuine precursor 7-aminomethyl-7-deazaguanine (PreQ1) at position 34 (anticodon wobble position) in tRNAs with GU(N) anticodons (tRNA-Asp, -Asn, -His and -Tyr). Catalysis occurs through a double-displacement mechanism. The nucleophile active site attacks the C1' of nucleotide 34 to detach the guanine base from the RNA, forming a covalent enzyme-RNA intermediate. The proton acceptor active site deprotonates the incoming PreQ1, allowing a nucleophilic attack on the C1' of the ribose to form the product. After dissociation, two additional enzymatic reactions on the tRNA convert PreQ1 to queuine (Q), resulting in the hypermodified nucleoside queuosine (7-(((4,5-cis-dihydroxy-2-cyclopenten-1-yl)amino)methyl)-7-deazaguanosine). The polypeptide is Queuine tRNA-ribosyltransferase (Francisella tularensis subsp. tularensis (strain FSC 198)).